A 359-amino-acid polypeptide reads, in one-letter code: Cytoplasmic tRNA 2-thiolation protein 2 (359 aa).

Belongs to the CTU2/NCS2 family.

Its subcellular location is the cytoplasm. The protein operates within tRNA modification; 5-methoxycarbonylmethyl-2-thiouridine-tRNA biosynthesis. In terms of biological role, plays a central role in 2-thiolation of mcm(5)S(2)U at tRNA wobble positions of tRNA(Lys), tRNA(Glu) and tRNA(Gln). May act by forming a heterodimer with NCS6 that ligates sulfur from thiocarboxylated URM1 onto the uridine of tRNAs at wobble position. Prior mcm(5) tRNA modification by the elongator complex is required for 2-thiolation. May also be involved in protein urmylation. The protein is Cytoplasmic tRNA 2-thiolation protein 2 of Ajellomyces capsulatus (strain NAm1 / WU24) (Darling's disease fungus).